Here is a 478-residue protein sequence, read N- to C-terminus: Cytochrome P450 family 716 subfamily AD polypeptide 4 (478 aa).

Residues 1–21 (MELFLPSVLLILTVFCFYYLF) form a helical membrane-spanning segment. C425 lines the heme pocket.

Belongs to the cytochrome P450 family. Heme serves as cofactor. In terms of tissue distribution, mainly expressed in petioles and, to a lower extent, in roots.

Its subcellular location is the membrane. It carries out the reaction (1S,3bR,4R,5aR,9aR,9bR,11aS)-1-[(4R)-5-[(2S)-3,3-dimethyloxiran-2-yl]-1,4-dihydroxybutan-2-yl]-3b,6,6,9a,11a-pentamethyl-7-oxo-1H,2H,3bH,4H,5H,5aH,6H,7H,9aH,9bH,10H,11H,11aH-cyclopenta[a]phenanthren-4-yl acetate + reduced [NADPH--hemoprotein reductase] + O2 = (1S,3bR,4R,5aR,9aR,9bR,11aS)-1-(1-hydroxy-4-oxobutan-2-yl)-3b,6,6,9a,11a-pentamethyl-7-oxo-1H,2H,3bH,4H,5H,5aH,6H,7H,9aH,9bH,10H,11H,11aH-cyclopenta[a]phenanthren-4-yl acetate + 2-methylpropanoate + oxidized [NADPH--hemoprotein reductase] + H2O + 2 H(+). It participates in secondary metabolite biosynthesis; terpenoid biosynthesis. Functionally, monooxygenase involved in the biosynthesis of limonoids triterpene natural products such as azadirachtin, an antifeedant widely used as bioinsecticide, and possessing many medicinal applications including anti-tumoral, anti-malarial, anti-rheumatic, antibacterial, anti-inflammatory, anti-pyretic and diuretic effects. Catalyzes the formation of (1S,3bR,4R,5aR,9aR,9bR,11aS)-1-(1-hydroxy-4-oxobutan-2-yl)-3b,6,6,9a,11a-pentamethyl-7-oxo-1H,2H,3bH,4H,5H,5aH,6H,7H,9aH,9bH,10H,11H,11aH-cyclopenta[a]phenanthren-4-yl acetate. The chain is Cytochrome P450 family 716 subfamily AD polypeptide 4 from Melia azedarach (Chinaberry tree).